A 186-amino-acid chain; its full sequence is CoB--CoM heterodisulfide reductase iron-sulfur subunit C 2 (186 aa).

4Fe-4S ferredoxin-type domains are found at residues 26–56 (GEDIVKSIKACYQCGTCTGSCPSGRRTAYRT) and 67–99 (LDDVLDSDDIWYCTTCYTCYERCPRDVKITEII). [4Fe-4S] cluster contacts are provided by Cys-36, Cys-39, Cys-42, Cys-46, Cys-79, Cys-82, Cys-85, and Cys-89.

Belongs to the HdrC family. In terms of assembly, the heterodisulfide reductase is composed of three subunits; HdrA, HdrB and HdrC. [4Fe-4S] cluster serves as cofactor.

Its pathway is cofactor metabolism; coenzyme M-coenzyme B heterodisulfide reduction; coenzyme B and coenzyme M from coenzyme M-coenzyme B heterodisulfide: step 1/1. In terms of biological role, part of a complex that catalyzes the reversible reduction of CoM-S-S-CoB to the thiol-coenzymes H-S-CoM (coenzyme M) and H-S-CoB (coenzyme B). This Methanocaldococcus jannaschii (strain ATCC 43067 / DSM 2661 / JAL-1 / JCM 10045 / NBRC 100440) (Methanococcus jannaschii) protein is CoB--CoM heterodisulfide reductase iron-sulfur subunit C 2 (hdrC2).